A 258-amino-acid chain; its full sequence is Isoprenyl transferase (258 aa).

Residue Asp-38 is part of the active site. Residue Asp-38 participates in Mg(2+) binding. Residues Gly-39–Arg-42, Trp-43, Arg-51, His-55, and Ser-83–Glu-85 contribute to the substrate site. The active-site Proton acceptor is the Asn-86. Substrate is bound by residues Trp-87, Arg-89, Arg-206, and Arg-212–Ser-214. Glu-225 serves as a coordination point for Mg(2+).

It belongs to the UPP synthase family. Homodimer. Mg(2+) is required as a cofactor.

In terms of biological role, catalyzes the condensation of isopentenyl diphosphate (IPP) with allylic pyrophosphates generating different type of terpenoids. This Bacillus cereus (strain ATCC 10987 / NRS 248) protein is Isoprenyl transferase.